Consider the following 141-residue polypeptide: 6,7-dimethyl-8-ribityllumazine synthase (141 aa).

5-amino-6-(D-ribitylamino)uracil is bound by residues Phe-11, 42–44 (ALE), and 66–68 (VVI). 71–72 (ET) is a (2S)-2-hydroxy-3-oxobutyl phosphate binding site. The Proton donor role is filled by His-74. Asn-98 serves as a coordination point for 5-amino-6-(D-ribitylamino)uracil. Residue Arg-112 participates in (2S)-2-hydroxy-3-oxobutyl phosphate binding.

The protein belongs to the DMRL synthase family.

It catalyses the reaction (2S)-2-hydroxy-3-oxobutyl phosphate + 5-amino-6-(D-ribitylamino)uracil = 6,7-dimethyl-8-(1-D-ribityl)lumazine + phosphate + 2 H2O + H(+). It participates in cofactor biosynthesis; riboflavin biosynthesis; riboflavin from 2-hydroxy-3-oxobutyl phosphate and 5-amino-6-(D-ribitylamino)uracil: step 1/2. In terms of biological role, catalyzes the formation of 6,7-dimethyl-8-ribityllumazine by condensation of 5-amino-6-(D-ribitylamino)uracil with 3,4-dihydroxy-2-butanone 4-phosphate. This is the penultimate step in the biosynthesis of riboflavin. The protein is 6,7-dimethyl-8-ribityllumazine synthase of Sphingopyxis alaskensis (strain DSM 13593 / LMG 18877 / RB2256) (Sphingomonas alaskensis).